The chain runs to 262 residues: Succinate dehydrogenase [ubiquinone] iron-sulfur subunit (262 aa).

The region spanning 21–110 is the 2Fe-2S ferredoxin-type domain; the sequence is KLIKIFRWDS…NNIIYVYPLP (90 aa). [2Fe-2S] cluster is bound by residues Cys73, Cys78, Cys81, and Cys93. Residues 154 to 184 form the 4Fe-4S ferredoxin-type domain; it reads DRLYLDGLYECILCACCSASCPSYWWNHDKY. [4Fe-4S] cluster-binding residues include Cys164, Cys167, and Cys170. Cys174 contributes to the [3Fe-4S] cluster binding site. Residue Trp179 participates in a ubiquinone binding. Residues Cys221 and Cys227 each contribute to the [3Fe-4S] cluster site. Cys231 serves as a coordination point for [4Fe-4S] cluster.

Belongs to the succinate dehydrogenase/fumarate reductase iron-sulfur protein family. As to quaternary structure, component of complex II composed of four subunits: a flavoprotein (FP), an iron-sulfur protein (IP), and a cytochrome b composed of a large and a small subunit. [2Fe-2S] cluster is required as a cofactor. It depends on [3Fe-4S] cluster as a cofactor. [4Fe-4S] cluster serves as cofactor.

The protein resides in the mitochondrion inner membrane. The enzyme catalyses a quinone + succinate = fumarate + a quinol. Its pathway is carbohydrate metabolism; tricarboxylic acid cycle; fumarate from succinate (eukaryal route): step 1/1. In terms of biological role, iron-sulfur protein (IP) subunit of succinate dehydrogenase (SDH) that is involved in complex II of the mitochondrial electron transport chain and is responsible for transferring electrons from succinate to ubiquinone (coenzyme Q). The polypeptide is Succinate dehydrogenase [ubiquinone] iron-sulfur subunit (SDH2) (Cyanidium caldarium (Red alga)).